The chain runs to 146 residues: Keratin-associated protein 4-1 (146 aa).

18 repeat units span residues 5–9 (CCGSV), 24–28 (CCRPS), 29–33 (CCQTT), 34–38 (CCCPS), 44–48 (CCRPS), 54–58 (CCQTT), 59–63 (CCRPS), 64–68 (CCHPV), 69–73 (CCQTT), 83–87 (CCRPL), 88–92 (CCQTT), 102–106 (CCRPL), 107–111 (CCQTT), 121–125 (CCRPL), 126–130 (CCQTT), 131–135 (CCRAT), 136–140 (CCRPS), and 141–145 (CCGSS). An 18 X 5 AA repeats of C-C-[GRQC]-[SPT]-[VSTL] region spans residues 5–145 (CCGSVCSDQG…CCRPSCCGSS (141 aa)).

The protein belongs to the KRTAP type 4 family. In terms of assembly, interacts with hair keratins. In terms of tissue distribution, expressed in the hair follicles.

Functionally, in the hair cortex, hair keratin intermediate filaments are embedded in an interfilamentous matrix, consisting of hair keratin-associated proteins (KRTAP), which are essential for the formation of a rigid and resistant hair shaft through their extensive disulfide bond cross-linking with abundant cysteine residues of hair keratins. The matrix proteins include the high-sulfur and high-glycine-tyrosine keratins. The polypeptide is Keratin-associated protein 4-1 (KRTAP4-1) (Homo sapiens (Human)).